Reading from the N-terminus, the 229-residue chain is Ribonuclease HII (229 aa).

An RNase H type-2 domain is found at 34-223 (WPVAGADEAG…LRKTENGPET (190 aa)). Residues aspartate 40, glutamate 41, and aspartate 131 each coordinate a divalent metal cation. The disordered stretch occupies residues 209-229 (MSFRPLRKTENGPETDELLSE).

This sequence belongs to the RNase HII family. The cofactor is Mn(2+). Mg(2+) is required as a cofactor.

It is found in the cytoplasm. The enzyme catalyses Endonucleolytic cleavage to 5'-phosphomonoester.. Its function is as follows. Endonuclease that specifically degrades the RNA of RNA-DNA hybrids. The sequence is that of Ribonuclease HII from Rhizobium johnstonii (strain DSM 114642 / LMG 32736 / 3841) (Rhizobium leguminosarum bv. viciae).